Consider the following 360-residue polypeptide: MAGHLASDFAFSPPPGGGGDGPGGPEPGWVDPRTWLSFQGPPGGPGIGPGVGPGSEVWGIPPCPPPYEFCGGMAYCGPQVGVGLVPQGGLETSQPEGEAGVGVESNSDGASPEPCTVTPGAVKLEKEKLEQNPEESQDIKALQKELEQFAKLLKQKRITLGYTQADVGLTLGVLFGKVFSQTTICRFEALQLSFKNMCKLRPLLQKWVEEADNNENLQEICKAETLVQARKRKRTSIENRVRGNLENLFLQCPKPTLQQISHIAQQLGLEKDVVRVWFCNRRQKGKRSSSDYAQREDFEAAGSPFSGGPVSFPLAPGPHFGTPGYGSPHFTALYSSVPFPEGEAFPPVSVTTLGSPMHSN.

Disordered regions lie at residues 1 to 52 (MAGH…PGVG) and 88 to 114 (GGLE…SPEP). Positions 4 to 12 (HLASDFAFS) match the 9aaTAD motif. S111 is subject to Phosphoserine; by MAPK. K123 is covalently cross-linked (Glycyl lysine isopeptide (Lys-Gly) (interchain with G-Cter in SUMO)). One can recognise a POU-specific domain in the interval 138 to 212 (DIKALQKELE…LLQKWVEEAD (75 aa)). Residues R157 and Q164 each contribute to the DNA site. DNA-binding regions lie at residues 180 to 186 (SQTTICR) and 193 to 196 (SFKN). Positions 230 to 289 (RKRKRTSIENRVRGNLENLFLQCPKPTLQQISHIAQQLGLEKDVVRVWFCNRRQKGKRSS) form a DNA-binding region, homeobox. Phosphothreonine is present on T235. 4 positions are modified to phosphoserine: S236, S289, S290, and S355.

Belongs to the POU transcription factor family. Class-5 subfamily. As to quaternary structure, interacts with PKM. Interacts with WWP2. Interacts with UBE2I and ZSCAN10. Interacts with PCGF1. Interacts with ESRRB; recruits ESRRB near the POU5F1-SOX2 element in the NANOG proximal promoter; the interaction is DNA independent. Interacts with ZNF322. Interacts with MAPK8 and MAPK9; the interaction allows MAPK8 and MAPK9 to phosphorylate POU5F1 on Ser-355. Interacts (when phosphorylated on Ser-355) with FBXW8. Interacts with FBXW4. Interacts with SOX2 and SOX15; binds synergistically with either SOX2 or SOX15 to DNA. Interacts with DDX56. In terms of processing, sumoylation enhances the protein stability, DNA binding and transactivation activity. Sumoylation is required for enhanced YES1 expression. Ubiquitinated; undergoes 'Lys-63'-linked polyubiquitination by WWP2 leading to proteasomal degradation. Post-translationally, ERK1/2-mediated phosphorylation at Ser-111 promotes nuclear exclusion and proteasomal degradation. Phosphorylation at Thr-235 and Ser-236 decrease DNA-binding and alters ability to activate transcription. As to expression, expressed in developing brain. Highest levels found in specific cell layers of the cortex, the olfactory bulb, the hippocampus and the cerebellum. Low levels of expression in adult tissues.

It localises to the cytoplasm. It is found in the nucleus. Its function is as follows. Transcription factor that binds to the octamer motif (5'-ATTTGCAT-3'). Forms a trimeric complex with SOX2 or SOX15 on DNA and controls the expression of a number of genes involved in embryonic development such as YES1, FGF4, UTF1 and ZFP206. Critical for early embryogenesis and for embryonic stem cell pluripotency. This chain is POU domain, class 5, transcription factor 1 (POU5F1), found in Homo sapiens (Human).